Here is a 281-residue protein sequence, read N- to C-terminus: Octanoyl-[GcvH]:protein N-octanoyltransferase (281 aa).

One can recognise a BPL/LPL catalytic domain in the interval 44-250; the sequence is GESAATMRSW…TLQQFAPKLT (207 aa). Catalysis depends on cysteine 149, which acts as the Acyl-thioester intermediate.

It belongs to the octanoyltransferase LipL family.

It catalyses the reaction N(6)-octanoyl-L-lysyl-[glycine-cleavage complex H protein] + L-lysyl-[lipoyl-carrier protein] = N(6)-octanoyl-L-lysyl-[lipoyl-carrier protein] + L-lysyl-[glycine-cleavage complex H protein]. Its pathway is protein modification; protein lipoylation via endogenous pathway; protein N(6)-(lipoyl)lysine from octanoyl-[acyl-carrier-protein]. Catalyzes the amidotransfer (transamidation) of the octanoyl moiety from octanoyl-GcvH to the lipoyl domain of the E2 subunit of lipoate-dependent enzymes. This chain is Octanoyl-[GcvH]:protein N-octanoyltransferase, found in Bacillus anthracis.